The following is a 151-amino-acid chain: Ribosomal RNA large subunit methyltransferase H (151 aa).

S-adenosyl-L-methionine-binding positions include Leu-73, Gly-100, and 119-124 (LSKMTL).

Belongs to the RNA methyltransferase RlmH family. Homodimer.

The protein resides in the cytoplasm. The catalysed reaction is pseudouridine(1915) in 23S rRNA + S-adenosyl-L-methionine = N(3)-methylpseudouridine(1915) in 23S rRNA + S-adenosyl-L-homocysteine + H(+). Functionally, specifically methylates the pseudouridine at position 1915 (m3Psi1915) in 23S rRNA. The polypeptide is Ribosomal RNA large subunit methyltransferase H (Campylobacter lari (strain RM2100 / D67 / ATCC BAA-1060)).